We begin with the raw amino-acid sequence, 747 residues long: Protein tyrosine phosphatase domain-containing protein 1 (747 aa).

The tract at residues 1–36 (MAAGVLPQNEDPYSTLVNSSGHAAHMDENSGRPAPK) is disordered. The span at 11–21 (DPYSTLVNSSG) shows a compositional bias: polar residues. The 172-residue stretch at 82–253 (YSSWVTDNIL…LAPLRNIFSC (172 aa)) folds into the Tyrosine-protein phosphatase domain. Cys190 serves as the catalytic Phosphocysteine intermediate. A phosphoserine mark is found at Ser392, Ser394, and Ser543. The disordered stretch occupies residues 549–570 (SSPKAQFPHGQETQDSTDLSEA).

The protein belongs to the protein-tyrosine phosphatase family. Non-receptor class PTPDC1 subfamily.

Functionally, may play roles in cilia formation and/or maintenance. The protein is Protein tyrosine phosphatase domain-containing protein 1 (Ptpdc1) of Mus musculus (Mouse).